Consider the following 1097-residue polypeptide: Leukemia inhibitory factor receptor (1097 aa).

Positions 1 to 44 (MMDIYVCLKRPSWMVDNKRMRTASNFQWLLSTFILLYLMNQVNS) are cleaved as a signal peptide. At 45–833 (QKKGAPHDLK…SMYVVTKENS (789 aa)) the chain is on the extracellular side. Residues 49-138 (APHDLKCVTN…EQNVSLIPDT (90 aa)) enclose the Fibronectin type-III 1 domain. Intrachain disulfides connect cysteine 55/cysteine 65 and cysteine 82/cysteine 90. 7 N-linked (GlcNAc...) asparagine glycosylation sites follow: asparagine 64, asparagine 85, asparagine 131, asparagine 143, asparagine 191, asparagine 243, and asparagine 303. Cysteines 213 and 270 form a disulfide. Fibronectin type-III domains lie at 335–434 (TPQQ…VYPH), 435–534 (TPTS…TEAS), 538–629 (GPDT…IPND), 627–719 (PNDD…IGYI), and 724–833 (PIVA…KENS). Cysteine 341 and cysteine 351 are oxidised to a cystine. N-linked (GlcNAc...) asparagine glycosylation is found at asparagine 390, asparagine 407, asparagine 426, asparagine 445, asparagine 481, and asparagine 489. A disulfide bridge links cysteine 466 with cysteine 511. The WSXWS motif motif lies at 519–523 (WSKWS). Residues asparagine 572, asparagine 652, asparagine 663, asparagine 680, asparagine 729, and asparagine 787 are each glycosylated (N-linked (GlcNAc...) asparagine). The chain crosses the membrane as a helical span at residues 834 to 858 (VGLIIAILIPVAVAVIVGVVTSILC). Topologically, residues 859–1097 (YRKREWIKET…TNFFQNKPND (239 aa)) are cytoplasmic. Residues 869–877 (FYPDIPNPE) carry the Box 1 motif motif. A Phosphoserine modification is found at serine 927. The segment at 983–1005 (PQAKPEEEQENDPVGGAGYKPQM) is disordered. Serine 1044 carries the phosphoserine modification. The tract at residues 1066-1097 (RQFLIPPKDEDSPKSNGGGWSFTNFFQNKPND) is disordered. A compositionally biased stretch (polar residues) spans 1086-1097 (SFTNFFQNKPND).

Belongs to the type I cytokine receptor family. Type 2 subfamily. In terms of assembly, heterodimer composed of LIFR and IL6ST. The heterodimer formed by LIFR and IL6ST interacts with the complex formed by CNTF and CNTFR.

It is found in the cell membrane. The protein localises to the secreted. Functionally, signal-transducing molecule. May have a common pathway with IL6ST. The soluble form inhibits the biological activity of LIF by blocking its binding to receptors on target cells. The chain is Leukemia inhibitory factor receptor (LIFR) from Homo sapiens (Human).